The primary structure comprises 126 residues: Methylglyoxal synthase (126 aa).

An MGS-like domain is found at Met-1–Asn-126. Substrate-binding positions include His-12, Lys-16, Thr-38–Thr-41, and Ser-59–Gly-60. Residue Asp-65 is the Proton donor/acceptor of the active site. Substrate is bound at residue His-92.

Belongs to the methylglyoxal synthase family.

The catalysed reaction is dihydroxyacetone phosphate = methylglyoxal + phosphate. In terms of biological role, catalyzes the formation of methylglyoxal from dihydroxyacetone phosphate. The sequence is that of Methylglyoxal synthase from Rhizobium meliloti (strain 1021) (Ensifer meliloti).